The chain runs to 964 residues: Lon protease homolog, mitochondrial (964 aa).

Residues 89 to 300 (VIALPLPHRP…LTLELVKKEM (212 aa)) form the Lon N-terminal domain. ATP is bound at residue 455–462 (GPPGVGKT). The interval 663 to 740 (GVSNEPDHES…TSKGNKGTDG (78 aa)) is disordered. The span at 673 to 687 (VSASVTEESGNGDNT) shows a compositional bias: polar residues. The span at 688 to 698 (TTKDEILKDPA) shows a compositional bias: basic and acidic residues. Positions 703–712 (SVTNNVTNPA) are enriched in polar residues. A Lon proteolytic domain is found at 773–957 (HTPVGVVMGL…SEIYDLAFQS (185 aa)). Catalysis depends on residues Ser863 and Lys906.

The protein belongs to the peptidase S16 family. In terms of assembly, homoheptamer. Organized in a ring with a central cavity.

It localises to the mitochondrion matrix. The enzyme catalyses Hydrolysis of proteins in presence of ATP.. Its function is as follows. ATP-dependent serine protease that mediates the selective degradation of misfolded, unassembled or oxidatively damaged polypeptides as well as certain short-lived regulatory proteins in the mitochondrial matrix. May also have a chaperone function in the assembly of inner membrane protein complexes. Participates in the regulation of mitochondrial gene expression and in the maintenance of the integrity of the mitochondrial genome. Binds to mitochondrial DNA in a site-specific manner. This is Lon protease homolog, mitochondrial (LON2) from Zea mays (Maize).